Reading from the N-terminus, the 460-residue chain is Dynactin subunit 4 (460 aa).

N-acetylalanine is present on Ala2. A coiled-coil region spans residues Gln152–Asn172. Ser196 is modified (phosphoserine). A Glycyl lysine isopeptide (Lys-Gly) (interchain with G-Cter in SUMO2) cross-link involves residue Lys215. At Thr407 the chain carries Phosphothreonine.

This sequence belongs to the dynactin subunit 4 family. As to quaternary structure, subunit of dynactin, a multiprotein complex part of a tripartite complex with dynein and a adapter, such as BICDL1, BICD2 or HOOK3. The dynactin complex is built around ACTR1A/ACTB filament and consists of an actin-related filament composed of a shoulder domain, a pointed end and a barbed end. Its length is defined by its flexible shoulder domain. The soulder is composed of 2 DCTN1 subunits, 4 DCTN2 and 2 DCTN3. The 4 DCNT2 (via N-terminus) bind the ACTR1A filament and act as molecular rulers to determine the length. The pointed end is important for binding dynein-dynactin cargo adapters. Consists of 4 subunits: ACTR10, DCNT4, DCTN5 and DCTN6. The barbed end is composed of a CAPZA1:CAPZB heterodimers, which binds ACTR1A/ACTB filament and dynactin and stabilizes dynactin. Interacts with ATP7B, but not ATP7A, in a copper-dependent manner. Interacts with ANK2; this interaction is required for localization at costameres. Interacts with N4BP2L1.

The protein localises to the cytoplasm. It is found in the cytoskeleton. Its subcellular location is the microtubule organizing center. The protein resides in the centrosome. It localises to the stress fiber. The protein localises to the cell cortex. It is found in the myofibril. Its subcellular location is the sarcomere. Part of the dynactin complex that activates the molecular motor dynein for ultra-processive transport along microtubules. The protein is Dynactin subunit 4 (DCTN4) of Pongo abelii (Sumatran orangutan).